The sequence spans 414 residues: tRNA(Ile)-lysidine synthase (414 aa).

Ser-17–Ser-22 lines the ATP pocket.

This sequence belongs to the tRNA(Ile)-lysidine synthase family.

It is found in the cytoplasm. It carries out the reaction cytidine(34) in tRNA(Ile2) + L-lysine + ATP = lysidine(34) in tRNA(Ile2) + AMP + diphosphate + H(+). In terms of biological role, ligates lysine onto the cytidine present at position 34 of the AUA codon-specific tRNA(Ile) that contains the anticodon CAU, in an ATP-dependent manner. Cytidine is converted to lysidine, thus changing the amino acid specificity of the tRNA from methionine to isoleucine. This chain is tRNA(Ile)-lysidine synthase, found in Exiguobacterium sibiricum (strain DSM 17290 / CCUG 55495 / CIP 109462 / JCM 13490 / 255-15).